The sequence spans 209 residues: Ribonuclease HII (209 aa).

Residues 7–198 (GPVAGVDEAG…VAKAHQEWLH (192 aa)) form the RNase H type-2 domain. Residues D13, E14, and D107 each contribute to the a divalent metal cation site.

Belongs to the RNase HII family. Requires Mn(2+) as cofactor. Mg(2+) serves as cofactor.

It localises to the cytoplasm. It carries out the reaction Endonucleolytic cleavage to 5'-phosphomonoester.. Endonuclease that specifically degrades the RNA of RNA-DNA hybrids. This chain is Ribonuclease HII, found in Corynebacterium glutamicum (strain ATCC 13032 / DSM 20300 / JCM 1318 / BCRC 11384 / CCUG 27702 / LMG 3730 / NBRC 12168 / NCIMB 10025 / NRRL B-2784 / 534).